A 145-amino-acid polypeptide reads, in one-letter code: I-leader protein (145 aa).

The protein resides in the host cytoplasm. The protein localises to the host perinuclear region. This is I-leader protein from Human adenovirus C serotype 2 (HAdV-2).